The primary structure comprises 362 residues: 3-dehydroquinate synthase (362 aa).

NAD(+)-binding positions include 71–76, 105–109, 129–130, lysine 142, lysine 151, and 169–172; these read DGEQYK, GVVGD, TT, and CLKT. Positions 184, 247, and 264 each coordinate Zn(2+).

This sequence belongs to the sugar phosphate cyclases superfamily. Dehydroquinate synthase family. NAD(+) serves as cofactor. The cofactor is Co(2+). Zn(2+) is required as a cofactor.

The protein resides in the cytoplasm. The catalysed reaction is 7-phospho-2-dehydro-3-deoxy-D-arabino-heptonate = 3-dehydroquinate + phosphate. It participates in metabolic intermediate biosynthesis; chorismate biosynthesis; chorismate from D-erythrose 4-phosphate and phosphoenolpyruvate: step 2/7. In terms of biological role, catalyzes the conversion of 3-deoxy-D-arabino-heptulosonate 7-phosphate (DAHP) to dehydroquinate (DHQ). This chain is 3-dehydroquinate synthase, found in Shigella flexneri.